Reading from the N-terminus, the 512-residue chain is NAD(P) transhydrogenase subunit alpha (512 aa).

Over 1 to 400 (MLIGVPRELL…KESKPTDPRV (400 aa)) the chain is Cytoplasmic. NAD(+)-binding positions include 125 to 128 (QALD), Val-175, 195 to 197 (DSR), and Gly-225. The tract at residues 375 to 394 (SAQPKQETKAAPVAEKKESK) is disordered. 2 helical membrane passes run 401–421 (KYGVMAGVGVLFLWLASVAPA) and 422–442 (AFLSHFTVFVLACVVGYYVVW). The Cytoplasmic portion of the chain corresponds to 443-451 (NVSHALHTP). Residues 452-472 (LMAVTNAISGIIIVGALLQIR) traverse the membrane as a helical segment. Residues 473–478 (QPTGNL) are Periplasmic-facing. The chain crosses the membrane as a helical span at residues 479 to 499 (FIDALAFVAILVASINIFGGF). The Cytoplasmic segment spans residues 500–512 (RVTQRMLAMFRKG).

It belongs to the AlaDH/PNT family. Heterodimer of an alpha (PntA) and a beta (PntB) chain.

The protein localises to the cell inner membrane. The enzyme catalyses NAD(+) + NADPH + H(+)(in) = NADH + NADP(+) + H(+)(out). In terms of biological role, the transhydrogenation between NADH and NADP is coupled to respiration and ATP hydrolysis and functions as a proton pump across the membrane. The sequence is that of NAD(P) transhydrogenase subunit alpha (pntA) from Haemophilus influenzae (strain ATCC 51907 / DSM 11121 / KW20 / Rd).